The primary structure comprises 760 residues: ATP-dependent zinc metalloprotease FtsH (760 aa).

Residues 1–5 (MNRKN) are Cytoplasmic-facing. A helical transmembrane segment spans residues 6–26 (VTRTITAIAVVVLLGWSFFYF). Residues 27–110 (SDDTRGYKPV…KVSTVVNQGS (84 aa)) are Extracellular-facing. The helical transmembrane segment at 111 to 131 (ILGELLVYVLPLLLLVGLFVM) threads the bilayer. Residues 132-760 (FSRMQGGARM…EVSRTKPAHG (629 aa)) lie on the Cytoplasmic side of the membrane. ATP is bound at residue 203-210 (GPPGTGKT). Zn(2+) is bound at residue His425. Residue Glu426 is part of the active site. 2 residues coordinate Zn(2+): His429 and Asp501. Residues 616 to 760 (DFGGRIPSDK…EVSRTKPAHG (145 aa)) are disordered. Residues 650–669 (AFKAAIAQATQAAEAARSDA) are compositionally biased toward low complexity. Acidic residues predominate over residues 740-750 (GSDESSAEQDD).

The protein in the central section; belongs to the AAA ATPase family. It in the C-terminal section; belongs to the peptidase M41 family. In terms of assembly, homohexamer. It depends on Zn(2+) as a cofactor.

The protein resides in the cell membrane. Functionally, acts as a processive, ATP-dependent zinc metallopeptidase for both cytoplasmic and membrane proteins. Plays a role in the quality control of integral membrane proteins. The polypeptide is ATP-dependent zinc metalloprotease FtsH (Mycobacterium tuberculosis (strain CDC 1551 / Oshkosh)).